We begin with the raw amino-acid sequence, 636 residues long: LEAF RUST 10 DISEASE-RESISTANCE LOCUS RECEPTOR-LIKE PROTEIN KINASE-like 1.5 (636 aa).

The N-terminal stretch at 1-26 is a signal peptide; sequence MSQPPWRCFSLLIFVLTIFSTKPSSA. Residues 27–257 lie on the Extracellular side of the membrane; sequence STSCSSSFHC…NNKRVNHIAV (231 aa). Residues N73, N102, N146, and N224 are each glycosylated (N-linked (GlcNAc...) asparagine). The helical transmembrane segment at 258–278 threads the bilayer; it reads LSLIFALTCLLLVFSVAVAIF. The Cytoplasmic portion of the chain corresponds to 279–636; sequence RSRRASFLSS…RVADDDVAKN (358 aa). A Protein kinase domain is found at 324–628; the sequence is FDPKRKIGDG…LRRIRSHTRV (305 aa). Residues 330-338 and K352 each bind ATP; that span reads IGDGGFGSV. D458 functions as the Proton acceptor in the catalytic mechanism.

Belongs to the protein kinase superfamily. Ser/Thr protein kinase family.

It localises to the cell membrane. It carries out the reaction L-seryl-[protein] + ATP = O-phospho-L-seryl-[protein] + ADP + H(+). The catalysed reaction is L-threonyl-[protein] + ATP = O-phospho-L-threonyl-[protein] + ADP + H(+). The sequence is that of LEAF RUST 10 DISEASE-RESISTANCE LOCUS RECEPTOR-LIKE PROTEIN KINASE-like 1.5 from Arabidopsis thaliana (Mouse-ear cress).